Here is a 230-residue protein sequence, read N- to C-terminus: Eukaryotic translation initiation factor 4E-1 (230 aa).

Residues 1–53 are disordered; the sequence is MVVEDSQKSTITDEQNPSRVDNDDDDLEDGEILEDADDAASAASKPPSAFLRN. Positions 8-19 are enriched in polar residues; sequence KSTITDEQNPSR. Residues 22-38 show a composition bias toward acidic residues; that stretch reads NDDDDLEDGEILEDADD. Residues 39 to 49 are compositionally biased toward low complexity; sequence AASAASKPPSA. EIF4G-binding stretches follow at residues 55 to 58 and 65 to 101; these read HPLE and FDNP…NNIH. MRNA is bound by residues 73–78, K105, and 123–124; these read KQAAWG and WE. C128 and C166 are disulfide-bonded. The tract at residues 149 to 158 is EIF4G-binding; it reads YTLLAMIGEQ. MRNA contacts are provided by residues 173-178 and 218-222; these read RNRQDK and KKHER.

This sequence belongs to the eukaryotic initiation factor 4E family. As to quaternary structure, EIF4F is a multi-subunit complex, the composition of which varies with external and internal environmental conditions. It is composed of at least EIF4A, EIF4E and EIF4G. EIF4E is also known to interact with other partners. In higher plants two isoforms of EIF4F have been identified, named isoform EIF4F and isoform EIF(iso)4F. Isoform EIF4F has subunits p220 and p26, whereas isoform EIF(iso)4F has subunits p82 and p28. (Microbial infection) Interacts with potyvirus viral genome-linked protein (VPg); this interaction is possible in susceptible hosts but impaired in resistant plants. In terms of processing, according to the redox status, the Cys-128-Cys-166 disulfide bridge may have a role in regulating protein function by affecting its ability to bind capped mRNA.

Its subcellular location is the nucleus. The protein resides in the cytoplasm. Functionally, component of the protein complex eIF4F, which is involved in the recognition of the mRNA cap, ATP-dependent unwinding of 5'-terminal secondary structure and recruitment of mRNA to the ribosome. Recognizes and binds the 7-methylguanosine-containing mRNA cap during an early step in the initiation of protein synthesis and facilitates ribosome binding by inducing the unwinding of the mRNAs secondary structures. Key component of recessive resistance to potyviruses. In terms of biological role, (Microbial infection) Susceptibility host factor required for viral infection by recruiting viral RNAs to the host ribosomal complex via an interaction with viral genome-linked protein (VPg). The protein is Eukaryotic translation initiation factor 4E-1 of Phaseolus vulgaris (Kidney bean).